Consider the following 514-residue polypeptide: Probable WRKY transcription factor 4 (514 aa).

Disordered stretches follow at residues 1–28, 175–204, and 278–394; these read MSEK…PPRP, QPQT…PLPA, and YKGQ…TVTE. Composition is skewed to polar residues over residues 185–198 and 286–299; these read QVQS…QIPT and PPQN…DNTA. A DNA-binding region (WRKY 1) is located at residues 223–287; sequence NVDKPADDGY…YKGQHNHEPP (65 aa). The span at 300 to 313 shows a compositional bias: low complexity; sequence NINGSSINNNRGSS. The span at 315–326 shows a compositional bias: polar residues; it reads LGASQFQTNSSN. Residues 359–380 show a composition bias toward basic and acidic residues; the sequence is TDVREKDENEPDPKRRSTEVRI. Residues 403–468 constitute a DNA-binding region (WRKY 2); the sequence is SEVDLLDDGY…YEGKHNHDLP (66 aa). Positions 434, 436, 439, 463, and 465 each coordinate Zn(2+). Residues 464-514 are disordered; that stretch reads NHDLPAAKSSSHAAAAAQLRPDNRPGGLANLNQQQQQQPVARLRLKEEQTT. The segment covering 469–480 has biased composition (low complexity); the sequence is AAKSSSHAAAAA.

As to expression, in young, mature and senescent leaves.

It localises to the nucleus. Its function is as follows. Transcription factor that binds specifically to the W box (5'-(T)TGAC[CT]-3'), a frequently occurring elicitor-responsive cis-acting element. Has a positive role in resistance to necrotrophic pathogens (e.g. Botrytis cinerea), but a negative effect on plant resistance to biotrophic pathogens (e.g. Pseudomonas syringae). This Arabidopsis thaliana (Mouse-ear cress) protein is Probable WRKY transcription factor 4 (WRKY4).